Reading from the N-terminus, the 415-residue chain is rRNA methyltransferase 3, mitochondrial (415 aa).

Residues 1–47 (MAALCRGTVRACILKPLGLSVSLQVKRNVRALRRTPVRVLPAAEKGR) constitute a mitochondrion transit peptide. A disordered region spans residues 41–73 (PAAEKGRERKEVEARRPQQPRQSEYQTRTSQGV). Over residues 44–56 (EKGRERKEVEARR) the composition is skewed to basic and acidic residues. A compositionally biased stretch (polar residues) spans 59-73 (QPRQSEYQTRTSQGV). Residues glycine 357, isoleucine 381, and leucine 390 each contribute to the S-adenosyl-L-methionine site.

It belongs to the class IV-like SAM-binding methyltransferase superfamily. RNA methyltransferase TrmH family.

Its subcellular location is the mitochondrion. The catalysed reaction is a uridine in rRNA + S-adenosyl-L-methionine = a 2'-O-methyluridine in rRNA + S-adenosyl-L-homocysteine + H(+). S-adenosyl-L-methionine-dependent 2'-O-ribose methyltransferase that catalyzes the formation of 2'-O-methylguanosine at position 1370 (Gm1370) in the mitochondrial large subunit ribosomal RNA (mtLSU rRNA), a conserved modification in the peptidyl transferase domain of the mtLSU rRNA. Also required for formation of 2'-O-methyluridine at position 1369 (Um1369) mediated by MRM2. The sequence is that of rRNA methyltransferase 3, mitochondrial from Xenopus tropicalis (Western clawed frog).